A 74-amino-acid chain; its full sequence is Veswaprin-a (74 aa).

The N-terminal stretch at 1–24 (MSSGGLLLLLGLLTLWAEVTPISG) is a signal peptide. A WAP domain is found at 27-71 (RPKKPGLCPPRPQKPCVKECKNDWSCPGQQKCCNYGCIDECRDPI). Cystine bridges form between cysteine 34–cysteine 59, cysteine 42–cysteine 63, cysteine 46–cysteine 58, and cysteine 52–cysteine 67.

The protein belongs to the venom waprin family. In terms of tissue distribution, expressed by the venom gland.

It is found in the secreted. Its function is as follows. Damages membranes of susceptible bacteria. Has no hemolytic activity. Not toxic to mice. Does not inhibit the proteinases elastase and cathepsin G. This Demansia vestigiata (Lesser black whip snake) protein is Veswaprin-a.